We begin with the raw amino-acid sequence, 61 residues long: MIHAHSNARLLRWAILAIAPVTLGACAPNGPPGLPYPDGKPLIPINTAAPEQGSSCQTRAP.

A signal peptide spans 1 to 25 (MIHAHSNARLLRWAILAIAPVTLGA). The tract at residues 37–61 (PDGKPLIPINTAAPEQGSSCQTRAP) is disordered. The span at 52-61 (QGSSCQTRAP) shows a compositional bias: polar residues.

This is Type IV secretion system protein PtlI homolog (ptlI) from Bordetella parapertussis (strain 12822 / ATCC BAA-587 / NCTC 13253).